A 563-amino-acid polypeptide reads, in one-letter code: Lipase 2 (563 aa).

Residues 1–19 form the signal peptide; the sequence is MVSKSLFLAAAVNLAGVLA. Gln20 is subject to Pyrrolidone carboxylic acid. Cys80 and Cys124 form a disulfide bridge. The Acyl-ester intermediate role is filled by Ser236. A disulfide bridge links Cys295 with Cys307. N-linked (GlcNAc...) asparagine glycosylation occurs at Asn302. Catalysis depends on Glu373, which acts as the Charge relay system. N-linked (GlcNAc...) asparagine glycosylation is present at Asn383. His482 functions as the Charge relay system in the catalytic mechanism.

The protein belongs to the type-B carboxylesterase/lipase family. Monomer.

It localises to the secreted. The catalysed reaction is a triacylglycerol + H2O = a diacylglycerol + a fatty acid + H(+). Its function is as follows. Hydrolyzes all ester bonds in triglyceride and displays a high affinity for triolein. For unsaturated substrates having long fatty acyl chains (C18:2 cis-9, cis-12 and C18:3 cis-9, cis-12, cis-15) GCL I shows higher specific activity than GCL II, whereas GCL II shows higher specific activity against saturated substrates having short fatty acid chains (C8, C10, C12 and C14). This chain is Lipase 2 (LIP2), found in Geotrichum candidum (Oospora lactis).